We begin with the raw amino-acid sequence, 518 residues long: Glutamate--cysteine ligase (518 aa).

The protein belongs to the glutamate--cysteine ligase type 1 family. Type 1 subfamily.

The catalysed reaction is L-cysteine + L-glutamate + ATP = gamma-L-glutamyl-L-cysteine + ADP + phosphate + H(+). It participates in sulfur metabolism; glutathione biosynthesis; glutathione from L-cysteine and L-glutamate: step 1/2. The protein is Glutamate--cysteine ligase of Shigella sonnei (strain Ss046).